We begin with the raw amino-acid sequence, 333 residues long: MDPFRKAIKGYDHDRIPVWFMRQAGRYLPSYMKYRQRMGIEEMMSSPDVIVDVTHDPVDRIGVDAAIIFADITTPLSGMGLRVRFLDSVGPVVENNIEKSGISAVEEFDPSSFSHPVLKAISKYRERYADPLIGFAGGPVTLLSYIISDGVDRDLFRVKRMMITEEKAYQAVMTRLTDMIIEFARMQISAGVDAFQIFDSWAGYLSPGEYEHFVKPYVYDILQELSGSIPTIYFSTMTSSYVADMDLPADFYSIDWRIDMKRFSAEIPDEKGIQGNLDPAIVNYDYALHEASKIVEAASGRDRYIFNTGHGLLPSTDPEKLKRLVEYVHSVNL.

Residues 22–26 (RQAGR), Asp-71, Tyr-145, Ser-200, and His-310 each bind substrate.

It belongs to the uroporphyrinogen decarboxylase family. As to quaternary structure, homodimer.

It localises to the cytoplasm. The catalysed reaction is uroporphyrinogen III + 4 H(+) = coproporphyrinogen III + 4 CO2. It functions in the pathway porphyrin-containing compound metabolism; protoporphyrin-IX biosynthesis; coproporphyrinogen-III from 5-aminolevulinate: step 4/4. In terms of biological role, catalyzes the decarboxylation of four acetate groups of uroporphyrinogen-III to yield coproporphyrinogen-III. The chain is Uroporphyrinogen decarboxylase from Thermoplasma acidophilum (strain ATCC 25905 / DSM 1728 / JCM 9062 / NBRC 15155 / AMRC-C165).